The chain runs to 70 residues: Large ribosomal subunit protein eL38 (70 aa).

The protein belongs to the eukaryotic ribosomal protein eL38 family.

The sequence is that of Large ribosomal subunit protein eL38 (RPL38) from Branchiostoma belcheri (Amphioxus).